The sequence spans 375 residues: POU domain, class 3, transcription factor 1-A (375 aa).

3 disordered regions span residues Met1 to Gln29, Pro67 to Leu138, and Met151 to Asp200. 3 stretches are compositionally biased toward polar residues: residues Val107–Trp117, Ser129–Leu138, and Met151–His160. Positions Ser162–Gln177 are enriched in basic and acidic residues. A POU-specific domain is found at Glu194 to Asp268. The segment at residues Lys286–Thr345 is a DNA-binding region (homeobox).

The protein belongs to the POU transcription factor family. Class-3 subfamily. In terms of tissue distribution, in embryos at the neural fold stage, localized primarily in the anterior neural plate, and localized mostly in the anterior region of the nerve cord of neurula stage embryos. In tailbud stages, expressed predominantly in the eye and brain, with weak expression along the length of the nerve cord. In adults, expressed in skin and brain.

The protein localises to the nucleus. Functionally, acts as a transcription factor. May play a role in neuronal differentiation. The chain is POU domain, class 3, transcription factor 1-A (pou3f1-a) from Xenopus laevis (African clawed frog).